Consider the following 248-residue polypeptide: Ureidoacrylate amidohydrolase RutB (248 aa).

Residue Asp43 is the Proton acceptor of the active site. The active site involves Lys152. The active-site Nucleophile is Cys185.

It belongs to the isochorismatase family. RutB subfamily.

The enzyme catalyses (Z)-3-ureidoacrylate + H2O + H(+) = (Z)-3-aminoacrylate + NH4(+) + CO2. It carries out the reaction (Z)-3-ureidoacrylate + H2O = (Z)-3-aminoacrylate + carbamate + H(+). It catalyses the reaction (Z)-2-methylureidoacrylate + H2O + H(+) = (Z)-2-methylaminoacrylate + NH4(+) + CO2. Hydrolyzes ureidoacrylate to form aminoacrylate and carbamate. The carbamate hydrolyzes spontaneously, thereby releasing one of the nitrogen atoms of the pyrimidine ring as ammonia and one of its carbon atoms as CO2. The protein is Ureidoacrylate amidohydrolase RutB of Serratia proteamaculans (strain 568).